The sequence spans 252 residues: 3-dehydroquinate dehydratase (252 aa).

3-dehydroquinate contacts are provided by residues serine 21, 46–48 (EWR), and arginine 82. The active-site Proton donor/acceptor is histidine 143. The active-site Schiff-base intermediate with substrate is the lysine 170. The 3-dehydroquinate site is built by arginine 213, serine 232, and glutamine 236.

Belongs to the type-I 3-dehydroquinase family. In terms of assembly, homodimer.

The enzyme catalyses 3-dehydroquinate = 3-dehydroshikimate + H2O. The protein operates within metabolic intermediate biosynthesis; chorismate biosynthesis; chorismate from D-erythrose 4-phosphate and phosphoenolpyruvate: step 3/7. In terms of biological role, involved in the third step of the chorismate pathway, which leads to the biosynthesis of aromatic amino acids. Catalyzes the cis-dehydration of 3-dehydroquinate (DHQ) and introduces the first double bond of the aromatic ring to yield 3-dehydroshikimate. The chain is 3-dehydroquinate dehydratase from Shigella boydii serotype 4 (strain Sb227).